We begin with the raw amino-acid sequence, 223 residues long: Guanylate kinase (223 aa).

The disordered stretch occupies residues 1-22 (MTADGGPDVRHGTRPEPSGDGR). Residues 7–19 (PDVRHGTRPEPSG) show a composition bias toward basic and acidic residues. Residues 21–201 (GRVVVLSGPS…ACAELVSLLV (181 aa)) form the Guanylate kinase-like domain. 28-35 (GPSAVGKS) contacts ATP. Positions 204 to 223 (APDRHDTSGRTGRQTTSHPD) are disordered. Over residues 212–223 (GRTGRQTTSHPD) the composition is skewed to polar residues.

Belongs to the guanylate kinase family.

The protein localises to the cytoplasm. It carries out the reaction GMP + ATP = GDP + ADP. Functionally, essential for recycling GMP and indirectly, cGMP. This is Guanylate kinase from Mycolicibacterium paratuberculosis (strain ATCC BAA-968 / K-10) (Mycobacterium paratuberculosis).